A 415-amino-acid polypeptide reads, in one-letter code: Gamma-glutamyl phosphate reductase (415 aa).

This sequence belongs to the gamma-glutamyl phosphate reductase family.

Its subcellular location is the cytoplasm. The catalysed reaction is L-glutamate 5-semialdehyde + phosphate + NADP(+) = L-glutamyl 5-phosphate + NADPH + H(+). Its pathway is amino-acid biosynthesis; L-proline biosynthesis; L-glutamate 5-semialdehyde from L-glutamate: step 2/2. Its function is as follows. Catalyzes the NADPH-dependent reduction of L-glutamate 5-phosphate into L-glutamate 5-semialdehyde and phosphate. The product spontaneously undergoes cyclization to form 1-pyrroline-5-carboxylate. In Listeria monocytogenes serovar 1/2a (strain ATCC BAA-679 / EGD-e), this protein is Gamma-glutamyl phosphate reductase.